The primary structure comprises 281 residues: Elongation factor 1-delta (281 aa).

Position 2 is an N-acetylalanine (A2). K17 bears the N6-acetyllysine mark. S37, E40, S44, and S60 each carry phosphoserine. T73 carries the post-translational modification Phosphothreonine. The tract at residues 80 to 115 is leucine-zipper; the sequence is LVVRIASLEVENQSLRGVVQELQQAISKLEARLNVL. Phosphoserine occurs at positions 86, 91, 94, and 106. K107 carries the N6-acetyllysine modification. K117 is subject to N6-acetyllysine; alternate. K117 bears the N6-succinyllysine; alternate mark. The tract at residues 118 to 172 is disordered; it reads SSPGHRATAPQTQHVSPMRQVEPPAKKPATPAEDDEDDDIDLFGSDNEEEDKEAA. S119 is subject to Phosphoserine. T129 is subject to Phosphothreonine. S133 is modified (phosphoserine). At T147 the chain carries Phosphothreonine. Residues 149–169 are compositionally biased toward acidic residues; the sequence is AEDDEDDDIDLFGSDNEEEDK. S162 is subject to Phosphoserine; by CK2. The tract at residues 173 to 281 is catalytic (GEF); sequence QLREERLRQY…SVDIAAFNKI (109 aa).

It belongs to the EF-1-beta/EF-1-delta family. EF-1 is composed of 4 subunits: alpha, beta, delta isoform 1, and gamma. Isoform 2 interacts with HSF1 and NFE2L2. As to expression, isoform 2 is specifically expressed in brain, cerebellum and testis.

The protein localises to the nucleus. Its function is as follows. EF-1-beta and EF-1-delta stimulate the exchange of GDP bound to EF-1-alpha to GTP, regenerating EF-1-alpha for another round of transfer of aminoacyl-tRNAs to the ribosome. Functionally, regulates induction of heat-shock-responsive genes through association with heat shock transcription factors and direct DNA-binding at heat shock promoter elements (HSE). The chain is Elongation factor 1-delta (EEF1D) from Homo sapiens (Human).